Reading from the N-terminus, the 959-residue chain is Glycine dehydrogenase (decarboxylating) (959 aa).

K708 bears the N6-(pyridoxal phosphate)lysine mark.

It belongs to the GcvP family. As to quaternary structure, the glycine cleavage system is composed of four proteins: P, T, L and H. The cofactor is pyridoxal 5'-phosphate.

It catalyses the reaction N(6)-[(R)-lipoyl]-L-lysyl-[glycine-cleavage complex H protein] + glycine + H(+) = N(6)-[(R)-S(8)-aminomethyldihydrolipoyl]-L-lysyl-[glycine-cleavage complex H protein] + CO2. In terms of biological role, the glycine cleavage system catalyzes the degradation of glycine. The P protein binds the alpha-amino group of glycine through its pyridoxal phosphate cofactor; CO(2) is released and the remaining methylamine moiety is then transferred to the lipoamide cofactor of the H protein. This Yersinia pseudotuberculosis serotype O:1b (strain IP 31758) protein is Glycine dehydrogenase (decarboxylating).